The chain runs to 414 residues: Glutamyl-tRNA reductase (414 aa).

Substrate contacts are provided by residues 49–52 (TCNR), S108, 113–115 (EPQ), and Q119. Residue C50 is the Nucleophile of the active site. 188–193 (GAGQTG) lines the NADP(+) pocket.

The protein belongs to the glutamyl-tRNA reductase family. As to quaternary structure, homodimer.

It carries out the reaction (S)-4-amino-5-oxopentanoate + tRNA(Glu) + NADP(+) = L-glutamyl-tRNA(Glu) + NADPH + H(+). It participates in porphyrin-containing compound metabolism; protoporphyrin-IX biosynthesis; 5-aminolevulinate from L-glutamyl-tRNA(Glu): step 1/2. Functionally, catalyzes the NADPH-dependent reduction of glutamyl-tRNA(Glu) to glutamate 1-semialdehyde (GSA). The protein is Glutamyl-tRNA reductase of Francisella tularensis subsp. holarctica (strain LVS).